Reading from the N-terminus, the 485-residue chain is Cobyric acid synthase (485 aa).

The GATase cobBQ-type domain occupies Lys-252–Gln-439. Cys-334 (nucleophile) is an active-site residue. Residue His-431 is part of the active site.

It belongs to the CobB/CobQ family. CobQ subfamily.

Its pathway is cofactor biosynthesis; adenosylcobalamin biosynthesis. Its function is as follows. Catalyzes amidations at positions B, D, E, and G on adenosylcobyrinic A,C-diamide. NH(2) groups are provided by glutamine, and one molecule of ATP is hydrogenolyzed for each amidation. This is Cobyric acid synthase from Azorhizobium caulinodans (strain ATCC 43989 / DSM 5975 / JCM 20966 / LMG 6465 / NBRC 14845 / NCIMB 13405 / ORS 571).